The primary structure comprises 374 residues: 3-dehydroquinate synthase (374 aa).

Belongs to the archaeal-type DHQ synthase family.

It catalyses the reaction 2-amino-2,3,7-trideoxy-D-lyxo-hept-6-ulosonate + NAD(+) + H2O = 3-dehydroquinate + NH4(+) + NADH + H(+). Its function is as follows. Catalyzes the oxidative deamination and cyclization of 2-amino-3,7-dideoxy-D-threo-hept-6-ulosonic acid (ADH) to yield 3-dehydroquinate (DHQ), which is fed into the canonical shikimic pathway of aromatic amino acid biosynthesis. The chain is 3-dehydroquinate synthase from Methanothermobacter thermautotrophicus (strain ATCC 29096 / DSM 1053 / JCM 10044 / NBRC 100330 / Delta H) (Methanobacterium thermoautotrophicum).